Reading from the N-terminus, the 542-residue chain is Putative CTP synthase (542 aa).

Residues 1-277 (MEIDLMKHIQ…HKTILDFFSL (277 aa)) form an amidoligase domain region. Ser23 lines the CTP pocket. Ser23 provides a ligand contact to UTP. ATP-binding positions include 24-29 (SLGKGV) and Asp81. Asp81 and Glu151 together coordinate Mg(2+). CTP is bound by residues 158–160 (DIE), 198–203 (KTKPTQ), and Lys234. Residues 198–203 (KTKPTQ) and Lys234 contribute to the UTP site. One can recognise a Glutamine amidotransferase type-1 domain in the interval 310 to 542 (YVELPDAYKS…LKMSLKIKES (233 aa)). Glu517 is a catalytic residue.

Belongs to the CTP synthase family. In terms of assembly, homotetramer.

It catalyses the reaction UTP + L-glutamine + ATP + H2O = CTP + L-glutamate + ADP + phosphate + 2 H(+). The catalysed reaction is L-glutamine + H2O = L-glutamate + NH4(+). The enzyme catalyses UTP + NH4(+) + ATP = CTP + ADP + phosphate + 2 H(+). It functions in the pathway pyrimidine metabolism; CTP biosynthesis via de novo pathway; CTP from UDP: step 2/2. Its activity is regulated as follows. Allosterically activated by GTP, when glutamine is the substrate; GTP has no effect on the reaction when ammonia is the substrate. The allosteric effector GTP functions by stabilizing the protein conformation that binds the tetrahedral intermediate(s) formed during glutamine hydrolysis. Inhibited by the product CTP, via allosteric rather than competitive inhibition. Its function is as follows. Catalyzes the ATP-dependent amination of UTP to CTP with either L-glutamine or ammonia as the source of nitrogen. Regulates intracellular CTP levels through interactions with the four ribonucleotide triphosphates. The protein is Putative CTP synthase of Ureaplasma parvum serovar 3 (strain ATCC 700970).